We begin with the raw amino-acid sequence, 431 residues long: Serine hydroxymethyltransferase 2 (431 aa).

(6S)-5,6,7,8-tetrahydrofolate contacts are provided by residues Leu131 and 135–137; that span reads GHL. Lys240 is modified (N6-(pyridoxal phosphate)lysine). Glu256 lines the (6S)-5,6,7,8-tetrahydrofolate pocket.

It belongs to the SHMT family. As to quaternary structure, homodimer. Pyridoxal 5'-phosphate serves as cofactor.

Its subcellular location is the cytoplasm. The enzyme catalyses (6R)-5,10-methylene-5,6,7,8-tetrahydrofolate + glycine + H2O = (6S)-5,6,7,8-tetrahydrofolate + L-serine. It functions in the pathway one-carbon metabolism; tetrahydrofolate interconversion. The protein operates within amino-acid biosynthesis; glycine biosynthesis; glycine from L-serine: step 1/1. In terms of biological role, catalyzes the reversible interconversion of serine and glycine with tetrahydrofolate (THF) serving as the one-carbon carrier. This reaction serves as the major source of one-carbon groups required for the biosynthesis of purines, thymidylate, methionine, and other important biomolecules. Also exhibits THF-independent aldolase activity toward beta-hydroxyamino acids, producing glycine and aldehydes, via a retro-aldol mechanism. The protein is Serine hydroxymethyltransferase 2 of Vibrio vulnificus (strain YJ016).